A 366-amino-acid polypeptide reads, in one-letter code: Ribosomal RNA large subunit methyltransferase M (366 aa).

S-adenosyl-L-methionine-binding positions include serine 188, cysteine 221–glycine 224, aspartate 240, aspartate 260, and aspartate 277. Catalysis depends on lysine 306, which acts as the Proton acceptor.

Belongs to the class I-like SAM-binding methyltransferase superfamily. RNA methyltransferase RlmE family. RlmM subfamily. As to quaternary structure, monomer.

The protein resides in the cytoplasm. It carries out the reaction cytidine(2498) in 23S rRNA + S-adenosyl-L-methionine = 2'-O-methylcytidine(2498) in 23S rRNA + S-adenosyl-L-homocysteine + H(+). Catalyzes the 2'-O-methylation at nucleotide C2498 in 23S rRNA. This Shigella sonnei (strain Ss046) protein is Ribosomal RNA large subunit methyltransferase M.